Reading from the N-terminus, the 1108-residue chain is Lon protease homolog, mitochondrial (1108 aa).

A mitochondrion-targeting transit peptide spans Met1 to Arg62. 2 disordered regions span residues Pro24–Ser192 and Leu299–Lys318. Residues Arg36 to Arg53 are compositionally biased toward low complexity. Composition is skewed to basic and acidic residues over residues Glu78–Gly103 and Lys119–Pro146. Over residues Ser161–Gly171 the composition is skewed to polar residues. 2 stretches are compositionally biased toward basic and acidic residues: residues Asp174–Leu188 and Asn309–Lys318. Residues Val200–Leu452 enclose the Lon N-terminal domain. Gly605–Thr612 is a binding site for ATP. Residues Asp821–Thr855 show a composition bias toward basic and acidic residues. The disordered stretch occupies residues Asp821 to Ala862. The region spanning Thr895–Glu1081 is the Lon proteolytic domain. Residues Ser987 and Lys1030 contribute to the active site.

This sequence belongs to the peptidase S16 family. As to quaternary structure, homohexamer or homoheptamer. Organized in a ring with a central cavity.

The protein localises to the mitochondrion matrix. The enzyme catalyses Hydrolysis of proteins in presence of ATP.. Functionally, ATP-dependent serine protease that mediates the selective degradation of misfolded, unassembled or oxidatively damaged polypeptides as well as certain short-lived regulatory proteins in the mitochondrial matrix. May also have a chaperone function in the assembly of inner membrane protein complexes. Participates in the regulation of mitochondrial gene expression and in the maintenance of the integrity of the mitochondrial genome. Binds to mitochondrial DNA in a site-specific manner. The protein is Lon protease homolog, mitochondrial (pim1) of Aspergillus fumigatus (strain ATCC MYA-4609 / CBS 101355 / FGSC A1100 / Af293) (Neosartorya fumigata).